Consider the following 199-residue polypeptide: MCVCGIDEAGRGPVIGPMVMAMVCADDINFYVNDSKLLTRNKRSLIFNDVSGLYHKYYIINPAEIDDAVKKHSLNNLEEQYAEKLILKAECEKIYIDCFDVNESRLERILKDRTGKEVICRHHADRDIKIVSAASIIAKVLRDNEIEKLKSIYGDFGSGYPSDPKTLRFLEHSIINHDNIDNIVRKEWKTYKNLVQGHI.

The region spanning 1–199 is the RNase H type-2 domain; it reads MCVCGIDEAG…TYKNLVQGHI (199 aa). 3 residues coordinate a divalent metal cation: D7, E8, and D97.

The protein belongs to the RNase HII family. The cofactor is Mn(2+). Mg(2+) is required as a cofactor.

The protein localises to the cytoplasm. The enzyme catalyses Endonucleolytic cleavage to 5'-phosphomonoester.. Endonuclease that specifically degrades the RNA of RNA-DNA hybrids. The sequence is that of Ribonuclease HII from Picrophilus torridus (strain ATCC 700027 / DSM 9790 / JCM 10055 / NBRC 100828 / KAW 2/3).